A 1297-amino-acid chain; its full sequence is Phosphoribosylformylglycinamidine synthase (1297 aa).

The interval 301–329 (TAISPFPGAATGSGGEIRDEGATGRGAKP) is disordered. Position 308–319 (308–319 (GAATGSGGEIRD)) interacts with ATP. Asp-680, Glu-719, Asn-723, and Asp-887 together coordinate Mg(2+). Residue Ser-889 participates in ATP binding. A Glutamine amidotransferase type-1 domain is found at 1045 to 1297 (IAILREQGVN…RLFRNARMVF (253 aa)). The active-site Nucleophile is Cys-1138. Residues His-1263 and Glu-1265 contribute to the active site.

It in the N-terminal section; belongs to the FGAMS family. In terms of assembly, monomer.

The protein resides in the cytoplasm. The catalysed reaction is N(2)-formyl-N(1)-(5-phospho-beta-D-ribosyl)glycinamide + L-glutamine + ATP + H2O = 2-formamido-N(1)-(5-O-phospho-beta-D-ribosyl)acetamidine + L-glutamate + ADP + phosphate + H(+). The protein operates within purine metabolism; IMP biosynthesis via de novo pathway; 5-amino-1-(5-phospho-D-ribosyl)imidazole from N(2)-formyl-N(1)-(5-phospho-D-ribosyl)glycinamide: step 1/2. Phosphoribosylformylglycinamidine synthase involved in the purines biosynthetic pathway. Catalyzes the ATP-dependent conversion of formylglycinamide ribonucleotide (FGAR) and glutamine to yield formylglycinamidine ribonucleotide (FGAM) and glutamate. This Haemophilus influenzae (strain ATCC 51907 / DSM 11121 / KW20 / Rd) protein is Phosphoribosylformylglycinamidine synthase.